Consider the following 132-residue polypeptide: Small ribosomal subunit protein uS8 (132 aa).

Belongs to the universal ribosomal protein uS8 family. Part of the 30S ribosomal subunit. Contacts proteins S5 and S12.

One of the primary rRNA binding proteins, it binds directly to 16S rRNA central domain where it helps coordinate assembly of the platform of the 30S subunit. The chain is Small ribosomal subunit protein uS8 from Bacillus subtilis (strain 168).